The following is a 595-amino-acid chain: Phenylalanine--tRNA ligase beta subunit (595 aa).

Residues 86 to 90 form a 3'-CCA residue in tRNA region; it reads KLSKP. Positions 292-370 constitute a B5 domain; sequence FNDRIMDVSI…VGYGFNNLPK (79 aa). Mg(2+) is bound by residues aspartate 348, aspartate 354, glutamate 357, and aspartate 358.

The protein belongs to the phenylalanyl-tRNA synthetase beta subunit family. Type 2 subfamily. In terms of assembly, tetramer of two alpha and two beta subunits. Requires Mg(2+) as cofactor.

It localises to the cytoplasm. It catalyses the reaction tRNA(Phe) + L-phenylalanine + ATP = L-phenylalanyl-tRNA(Phe) + AMP + diphosphate + H(+). This chain is Phenylalanine--tRNA ligase beta subunit (FRS1), found in Saccharomyces cerevisiae (strain ATCC 204508 / S288c) (Baker's yeast).